The sequence spans 122 residues: MIQTESRLEVADNTGAREVLCIKVLGGSKRRYASVGDIIKVTVKDAAPRGRVKKGDIYNAVVVRTAKGVRRADGSLIKFDGNAAVLLNNKLEPIGTRIFGPVTRELRTERFMKIVSLAPEVL.

Belongs to the universal ribosomal protein uL14 family. As to quaternary structure, part of the 50S ribosomal subunit. Forms a cluster with proteins L3 and L19. In the 70S ribosome, L14 and L19 interact and together make contacts with the 16S rRNA in bridges B5 and B8.

Binds to 23S rRNA. Forms part of two intersubunit bridges in the 70S ribosome. The polypeptide is Large ribosomal subunit protein uL14 (Cupriavidus taiwanensis (strain DSM 17343 / BCRC 17206 / CCUG 44338 / CIP 107171 / LMG 19424 / R1) (Ralstonia taiwanensis (strain LMG 19424))).